We begin with the raw amino-acid sequence, 348 residues long: VIP36-like protein (348 aa).

The N-terminal stretch at Met-1–Ala-44 is a signal peptide. Residues Gly-45–Ala-313 lie on the Lumenal side of the membrane. An L-type lectin-like domain is found at Glu-49 to Leu-274. The a carbohydrate site is built by Ser-93 and Asp-128. Residues Asp-159, Tyr-161, and Asn-163 each contribute to the Ca(2+) site. Residue Tyr-161 to Asn-163 participates in a carbohydrate binding. Asn-181 carries an N-linked (GlcNAc...) (high mannose) asparagine glycan. His-188 contacts a carbohydrate. Ca(2+) is bound at residue Asp-191. Cys-200 and Cys-237 are oxidised to a cystine. Gly-258–Leu-260 provides a ligand contact to a carbohydrate. The chain crosses the membrane as a helical span at residues Leu-314–Tyr-336. At Asn-337–Tyr-348 the chain is on the cytoplasmic side. The Endoplasmic reticulum retention signal motif lies at Arg-344–Arg-346.

As to expression, expressed in numerous tissues. Highest expression in skeletal muscle and kidney, intermediate levels in heart, liver and placenta, low levels in brain, thymus, spleen, small intestine and lung.

It is found in the endoplasmic reticulum membrane. The protein localises to the golgi apparatus membrane. In terms of biological role, may be involved in the regulation of export from the endoplasmic reticulum of a subset of glycoproteins. May function as a regulator of ERGIC-53. The sequence is that of VIP36-like protein (LMAN2L) from Homo sapiens (Human).